Consider the following 371-residue polypeptide: Bifunctional enzyme IspD/IspF (371 aa).

A 2-C-methyl-D-erythritol 4-phosphate cytidylyltransferase region spans residues 1-210 (MSEISLIMLA…LDLPTPSFEI (210 aa)). Positions 211 to 371 (FTGNGFDVHE…NLKYFDWTRL (161 aa)) are 2-C-methyl-D-erythritol 2,4-cyclodiphosphate synthase. Asp-217 and His-219 together coordinate a divalent metal cation. 4-CDP-2-C-methyl-D-erythritol 2-phosphate is bound by residues 217-219 (DVH) and 243-244 (HS). His-251 is a binding site for a divalent metal cation. 4-CDP-2-C-methyl-D-erythritol 2-phosphate is bound by residues 265 to 267 (DIG), 270 to 274 (YPDTD), 341 to 344 (TTTE), Phe-348, and Arg-351.

In the N-terminal section; belongs to the IspD/TarI cytidylyltransferase family. IspD subfamily. It in the C-terminal section; belongs to the IspF family. Requires a divalent metal cation as cofactor.

It catalyses the reaction 2-C-methyl-D-erythritol 4-phosphate + CTP + H(+) = 4-CDP-2-C-methyl-D-erythritol + diphosphate. The catalysed reaction is 4-CDP-2-C-methyl-D-erythritol 2-phosphate = 2-C-methyl-D-erythritol 2,4-cyclic diphosphate + CMP. It participates in isoprenoid biosynthesis; isopentenyl diphosphate biosynthesis via DXP pathway; isopentenyl diphosphate from 1-deoxy-D-xylulose 5-phosphate: step 2/6. The protein operates within isoprenoid biosynthesis; isopentenyl diphosphate biosynthesis via DXP pathway; isopentenyl diphosphate from 1-deoxy-D-xylulose 5-phosphate: step 4/6. Bifunctional enzyme that catalyzes the formation of 4-diphosphocytidyl-2-C-methyl-D-erythritol from CTP and 2-C-methyl-D-erythritol 4-phosphate (MEP) (IspD), and catalyzes the conversion of 4-diphosphocytidyl-2-C-methyl-D-erythritol 2-phosphate (CDP-ME2P) to 2-C-methyl-D-erythritol 2,4-cyclodiphosphate (ME-CPP) with a corresponding release of cytidine 5-monophosphate (CMP) (IspF). The protein is Bifunctional enzyme IspD/IspF of Campylobacter jejuni subsp. jejuni serotype O:23/36 (strain 81-176).